The chain runs to 288 residues: Ribosomal RNA small subunit methyltransferase A (288 aa).

S-adenosyl-L-methionine-binding residues include N28, L30, G55, E76, D101, and N130.

It belongs to the class I-like SAM-binding methyltransferase superfamily. rRNA adenine N(6)-methyltransferase family. RsmA subfamily.

The protein resides in the cytoplasm. The enzyme catalyses adenosine(1518)/adenosine(1519) in 16S rRNA + 4 S-adenosyl-L-methionine = N(6)-dimethyladenosine(1518)/N(6)-dimethyladenosine(1519) in 16S rRNA + 4 S-adenosyl-L-homocysteine + 4 H(+). Functionally, specifically dimethylates two adjacent adenosines (A1518 and A1519) in the loop of a conserved hairpin near the 3'-end of 16S rRNA in the 30S particle. May play a critical role in biogenesis of 30S subunits. This is Ribosomal RNA small subunit methyltransferase A from Moorella thermoacetica (strain ATCC 39073 / JCM 9320).